Consider the following 251-residue polypeptide: Pyridoxine 5'-phosphate synthase (251 aa).

Position 7 (N7) interacts with 3-amino-2-oxopropyl phosphate. 9-10 (DH) is a 1-deoxy-D-xylulose 5-phosphate binding site. Position 18 (R18) interacts with 3-amino-2-oxopropyl phosphate. H43 acts as the Proton acceptor in catalysis. 1-deoxy-D-xylulose 5-phosphate is bound by residues R45 and H50. Residue E70 is the Proton acceptor of the active site. Residue T100 participates in 1-deoxy-D-xylulose 5-phosphate binding. H198 acts as the Proton donor in catalysis. Residues A199 and 220–221 (GH) each bind 3-amino-2-oxopropyl phosphate.

It belongs to the PNP synthase family. Homooctamer; tetramer of dimers.

It is found in the cytoplasm. The catalysed reaction is 3-amino-2-oxopropyl phosphate + 1-deoxy-D-xylulose 5-phosphate = pyridoxine 5'-phosphate + phosphate + 2 H2O + H(+). It functions in the pathway cofactor biosynthesis; pyridoxine 5'-phosphate biosynthesis; pyridoxine 5'-phosphate from D-erythrose 4-phosphate: step 5/5. Its function is as follows. Catalyzes the complicated ring closure reaction between the two acyclic compounds 1-deoxy-D-xylulose-5-phosphate (DXP) and 3-amino-2-oxopropyl phosphate (1-amino-acetone-3-phosphate or AAP) to form pyridoxine 5'-phosphate (PNP) and inorganic phosphate. The protein is Pyridoxine 5'-phosphate synthase of Dechloromonas aromatica (strain RCB).